The sequence spans 626 residues: Pheromone B alpha 3 receptor (626 aa).

Helical transmembrane passes span 8–28 (LFPT…PWHL), 36–56 (CFFM…SIVW), 70–90 (ISIR…LCII), 113–133 (IIID…MQYI), 163–183 (IWPV…LIEF), 208–228 (LMAL…FVIV), and 271–291 (ELTR…FGFA). Disordered stretches follow at residues 363–409 (KQYT…SSPI), 481–509 (ATFT…SSSA), 524–549 (STTD…RLPS), and 571–626 (QDVA…RASV). Residues 376-391 (SSSGFSSSESTRFGSS) are compositionally biased toward low complexity. Residues 574-606 (ATGTAAPTTTAPAPASTTIAPATTTATAPTTTA) are compositionally biased toward low complexity.

Belongs to the G-protein coupled receptor 4 family.

The protein resides in the membrane. Its function is as follows. Receptor for the BAP3 pheromone, a prenylated mating factor. The protein is Pheromone B alpha 3 receptor (BAR3) of Schizophyllum commune (strain H4-8 / FGSC 9210) (Split gill fungus).